The following is a 276-amino-acid chain: NAD-capped RNA hydrolase NudC (276 aa).

Arg82 serves as a coordination point for substrate. 2 residues coordinate Zn(2+): Cys112 and Cys115. Glu125 is a substrate binding site. Zn(2+) contacts are provided by Cys130 and Cys133. Tyr138 serves as a coordination point for substrate. A Nudix hydrolase domain is found at 139-262 (PRISPSMIVL…SIARYLIDLY (124 aa)). Residues Ala172, Glu188, and Glu192 each coordinate a divalent metal cation. The Nudix box signature appears at 173-194 (GFAEPGESAEDCLVREVREEVA). 206 to 213 (QCWPFPHS) is a binding site for substrate. Glu233 serves as a coordination point for a divalent metal cation. Ala255 contacts substrate.

Belongs to the Nudix hydrolase family. NudC subfamily. In terms of assembly, homodimer. Requires Mg(2+) as cofactor. Mn(2+) is required as a cofactor. Zn(2+) serves as cofactor.

The enzyme catalyses a 5'-end NAD(+)-phospho-ribonucleoside in mRNA + H2O = a 5'-end phospho-adenosine-phospho-ribonucleoside in mRNA + beta-nicotinamide D-ribonucleotide + 2 H(+). The catalysed reaction is NAD(+) + H2O = beta-nicotinamide D-ribonucleotide + AMP + 2 H(+). It catalyses the reaction NADH + H2O = reduced beta-nicotinamide D-ribonucleotide + AMP + 2 H(+). MRNA decapping enzyme that specifically removes the nicotinamide adenine dinucleotide (NAD) cap from a subset of mRNAs by hydrolyzing the diphosphate linkage to produce nicotinamide mononucleotide (NMN) and 5' monophosphate mRNA. The NAD-cap is present at the 5'-end of some mRNAs and stabilizes RNA against 5'-processing. Has preference for mRNAs with a 5'-end purine. Catalyzes the hydrolysis of a broad range of dinucleotide pyrophosphates. This Pseudomonas putida (strain GB-1) protein is NAD-capped RNA hydrolase NudC.